A 232-amino-acid chain; its full sequence is Enolase-phosphatase E1 (232 aa).

This sequence belongs to the HAD-like hydrolase superfamily. MasA/MtnC family. In terms of assembly, monomer. Requires Mg(2+) as cofactor.

The enzyme catalyses 5-methylsulfanyl-2,3-dioxopentyl phosphate + H2O = 1,2-dihydroxy-5-(methylsulfanyl)pent-1-en-3-one + phosphate. The protein operates within amino-acid biosynthesis; L-methionine biosynthesis via salvage pathway; L-methionine from S-methyl-5-thio-alpha-D-ribose 1-phosphate: step 3/6. It functions in the pathway amino-acid biosynthesis; L-methionine biosynthesis via salvage pathway; L-methionine from S-methyl-5-thio-alpha-D-ribose 1-phosphate: step 4/6. Bifunctional enzyme that catalyzes the enolization of 2,3-diketo-5-methylthiopentyl-1-phosphate (DK-MTP-1-P) into the intermediate 2-hydroxy-3-keto-5-methylthiopentenyl-1-phosphate (HK-MTPenyl-1-P), which is then dephosphorylated to form the acireductone 1,2-dihydroxy-3-keto-5-methylthiopentene (DHK-MTPene). The sequence is that of Enolase-phosphatase E1 from Xylella fastidiosa (strain Temecula1 / ATCC 700964).